The sequence spans 317 residues: L-lactate dehydrogenase 1 (317 aa).

Residues valine 17, aspartate 38, lysine 43, tyrosine 69, and 83 to 84 contribute to the NAD(+) site; that span reads GA. 2 residues coordinate substrate: glutamine 86 and arginine 92. NAD(+)-binding positions include serine 105, 122–124, and serine 147; that span reads ATN. A substrate-binding site is contributed by 124-127; the sequence is NPVD. 152–155 provides a ligand contact to substrate; sequence DSAR. The active-site Proton acceptor is histidine 179. Tyrosine 223 is modified (phosphotyrosine). Residue threonine 232 participates in substrate binding.

The protein belongs to the LDH/MDH superfamily. LDH family. As to quaternary structure, homotetramer.

Its subcellular location is the cytoplasm. It carries out the reaction (S)-lactate + NAD(+) = pyruvate + NADH + H(+). It functions in the pathway fermentation; pyruvate fermentation to lactate; (S)-lactate from pyruvate: step 1/1. Its function is as follows. Catalyzes the conversion of lactate to pyruvate (Potential). Appears to be the primary factor that allows S.aureus growth during nitrosative stress in both aerobically and anaerobically cultured cells. The polypeptide is L-lactate dehydrogenase 1 (Staphylococcus aureus (strain JH1)).